We begin with the raw amino-acid sequence, 335 residues long: Probable E3 ubiquitin-protein ligase BAH1-like (335 aa).

Residues 1–163 enclose the SPX domain; sequence MKFGETFTEY…SSENGKNFKL (163 aa). Residues 231–280 form an RING-type zinc finger; that stretch reads CAICLETVFNPYALKCGHIFCNSCACSAASVLIFQGIKAAPRHSKCPICR.

The protein belongs to the RING-type zinc finger family.

It carries out the reaction S-ubiquitinyl-[E2 ubiquitin-conjugating enzyme]-L-cysteine + [acceptor protein]-L-lysine = [E2 ubiquitin-conjugating enzyme]-L-cysteine + N(6)-ubiquitinyl-[acceptor protein]-L-lysine.. It participates in protein modification; protein ubiquitination. This chain is Probable E3 ubiquitin-protein ligase BAH1-like (RF178), found in Arabidopsis thaliana (Mouse-ear cress).